The primary structure comprises 424 residues: Putative histone deacetylase complex subunit cti6 (424 aa).

4 disordered regions span residues 1–49 (MPSN…GEVT), 117–155 (SKYL…TMNS), 170–341 (KEKS…PDGT), and 381–405 (AQSA…ETLR). The PHD-type zinc finger occupies 48 to 103 (VTRCVCGIVESDDEASDGGLYIQCDQCSVWQHGNCVGFADESEVPEVYYCEICHPE). Positions 127-137 (EASQTEESSST) are enriched in low complexity. Position 187 is a phosphoserine (Ser-187). Positions 241 to 256 (DAPEEETVDTVEEIAD) are enriched in acidic residues. Residues 257 to 266 (EEKHSVKEES) show a composition bias toward basic and acidic residues. Residues 272-287 (QSSQQSTITSISTTTR) are compositionally biased toward low complexity. The span at 294–303 (REAAAEDKAD) shows a compositional bias: basic and acidic residues. The span at 313–324 (SKTRKVGGRRGK) shows a compositional bias: basic residues. Over residues 392–405 (SSKEGPEEEKETLR) the composition is skewed to basic and acidic residues.

The protein resides in the cytoplasm. The protein localises to the nucleus. Functionally, could be a component of the RPD3C(L) histone deacetylase complex (HDAC). The protein is Putative histone deacetylase complex subunit cti6 (cti6) of Schizosaccharomyces pombe (strain 972 / ATCC 24843) (Fission yeast).